Consider the following 204-residue polypeptide: Lymphotoxin-alpha (204 aa).

The N-terminal stretch at 1–33 is a signal peptide; the sequence is MTPPGRLYLLRVCSTPPLLLLGLLLALPLEAQG. The 143-residue stretch at 62–204 folds into the THD domain; sequence PAAHLVGDPS…SSVFFGAFAL (143 aa). N-linked (GlcNAc...) asparagine glycosylation is present at asparagine 95. Cysteines 119 and 155 form a disulfide.

This sequence belongs to the tumor necrosis factor family. As to quaternary structure, homotrimer, and heterotrimer of either two LTB and one LTA subunits or (less prevalent) two LTA and one LTB subunits. Interacts with TNFRSF14.

It localises to the secreted. Its subcellular location is the membrane. Cytokine that in its homotrimeric form binds to TNFRSF1A/TNFR1, TNFRSF1B/TNFBR and TNFRSF14/HVEM. In its heterotrimeric form with LTB binds to TNFRSF3/LTBR. Lymphotoxin is produced by lymphocytes and is cytotoxic for a wide range of tumor cells in vitro and in vivo. The chain is Lymphotoxin-alpha (LTA) from Bos taurus (Bovine).